Reading from the N-terminus, the 296-residue chain is Phosphatidylglycerol--prolipoprotein diacylglyceryl transferase (296 aa).

The next 4 helical transmembrane spans lie at 10–30 (IAFSLGPVKVHWYGLMYLAAF), 57–77 (LLFYGMLGVVLGGRIGYMLFY), 92–112 (VWEGGMSFHGGLLGVLVACWL), and 119–139 (LHFFDVMDFVAPLVPLGLGFG). Residue Arg-140 coordinates a 1,2-diacyl-sn-glycero-3-phospho-(1'-sn-glycerol). 3 consecutive transmembrane segments (helical) span residues 194 to 214 (QLYEAALEGVVMFVVLWTFSM), 220 to 240 (YALSGLFALLYGVFRFIVEFV), and 254 to 274 (WLTMGQILSLPLIAVGLALLA).

It belongs to the Lgt family.

It localises to the cell inner membrane. The catalysed reaction is L-cysteinyl-[prolipoprotein] + a 1,2-diacyl-sn-glycero-3-phospho-(1'-sn-glycerol) = an S-1,2-diacyl-sn-glyceryl-L-cysteinyl-[prolipoprotein] + sn-glycerol 1-phosphate + H(+). It participates in protein modification; lipoprotein biosynthesis (diacylglyceryl transfer). Functionally, catalyzes the transfer of the diacylglyceryl group from phosphatidylglycerol to the sulfhydryl group of the N-terminal cysteine of a prolipoprotein, the first step in the formation of mature lipoproteins. The chain is Phosphatidylglycerol--prolipoprotein diacylglyceryl transferase from Xanthomonas oryzae pv. oryzae (strain MAFF 311018).